Here is a 59-residue protein sequence, read N- to C-terminus: Large ribosomal subunit protein bL32 (59 aa).

A disordered region spans residues 1-34 (MAVQKSKVTRSRRGQRRSHDALTGPTLSVDKTTG). The span at 7-16 (KVTRSRRGQR) shows a compositional bias: basic residues.

The protein belongs to the bacterial ribosomal protein bL32 family.

The chain is Large ribosomal subunit protein bL32 from Marinomonas sp. (strain MWYL1).